We begin with the raw amino-acid sequence, 335 residues long: Corrinoid adenosyltransferase PduO (335 aa).

H206 provides a ligand contact to heme.

It belongs to the Cob(I)alamin adenosyltransferase family. PduO subfamily. Forms a complex with PduS. It depends on heme b as a cofactor. Mg(2+) is required as a cofactor.

It localises to the bacterial microcompartment. It carries out the reaction cob(I)alamin-[corrinoid adenosyltransferase] + ATP = apo-[corrinoid adenosyltransferase] + adenosylcob(III)alamin + triphosphate. The protein operates within polyol metabolism; 1,2-propanediol degradation. Its pathway is cofactor biosynthesis; adenosylcobalamin biosynthesis. Functionally, converts cob(I)alamin to adenosylcobalamin (adenosylcob(III)alamin), the cofactor for propanediol dehydratase. Found in the bacterial microcompartment (BMC) dedicated to 1,2-propanediol (1,2-PD) degradation. PduS and PduO allow regeneration of the adenosylcobalamin cofactor within the BMC. In terms of biological role, expression of a cosmid containing the full 21-gene pdu operon in E.coli allows E.coli to grow on 1,2-propanediol (1,2-PD) with the appearance of bacterial microcompartments (BMC) in its cytoplasm. The 1,2-PD-specific bacterial microcompartment (BMC) concentrates low levels of 1,2-PD catabolic enzymes, concentrates volatile reaction intermediates thus enhancing pathway flux and keeps the level of toxic, mutagenic propionaldehyde low. The sequence is that of Corrinoid adenosyltransferase PduO from Citrobacter freundii.